A 122-amino-acid chain; its full sequence is Large ribosomal subunit protein uL18 (122 aa).

Over residues 1–19 (MSKLSRKQQTQKRHKRLRR) the composition is skewed to basic residues. Residues 1 to 27 (MSKLSRKQQTQKRHKRLRRNLSGTESR) form a disordered region.

This sequence belongs to the universal ribosomal protein uL18 family. Part of the 50S ribosomal subunit; part of the 5S rRNA/L5/L18/L25 subcomplex. Contacts the 5S and 23S rRNAs.

Its function is as follows. This is one of the proteins that bind and probably mediate the attachment of the 5S RNA into the large ribosomal subunit, where it forms part of the central protuberance. This Prochlorococcus marinus (strain NATL1A) protein is Large ribosomal subunit protein uL18.